The chain runs to 581 residues: Leucine-rich repeat-containing protein 47 (581 aa).

7 LRR repeats span residues 78–97, 102–123, 132–154, 156–177, 182–204, 205–227, and 228–248; these read QLHS…SPEL, ALRV…EGLG, QLQS…ARCA, RLQS…LFRP, LLSE…AHLA, SLKT…ADCP, and KLKE…EKMV. The tract at residues 262 to 301 is disordered; that stretch reads AGGRGGRSKGRQEASEKEDRKKRRERKQHRESGEGEEEVA. The span at 271–280 shows a compositional bias: basic and acidic residues; the sequence is GRQEASEKED. S314, S430, and S519 each carry phosphoserine. Residues 401 to 436 are a coiled coil; sequence LGRKEAKAKELVRQLQLEAEEQRKQKKRQSVSGLHR.

This Mus musculus (Mouse) protein is Leucine-rich repeat-containing protein 47 (Lrrc47).